A 284-amino-acid chain; its full sequence is Tropomyosin isoforms a/b/d/f (284 aa).

Residues 1–284 (MDAIKKKMQA…DSTFQELSGY (284 aa)) are a coiled coil. The tract at residues 40 to 78 (EEELRDTQKKMTQTGDDLDKAQEDLSAATSKLEEKEKTV) is disordered.

The protein belongs to the tropomyosin family. In terms of tissue distribution, isoform a and isoform d are expressed in body wall muscles, vulva, anus muscles and male tail muscles. Located to the myofibrils of thin actin filaments.

Its subcellular location is the cytoplasm. The protein resides in the myofibril. It localises to the sarcomere. It is found in the i band. In terms of biological role, tropomyosin, in association with the troponin complex, plays a central role in the calcium dependent regulation of muscle contraction. Involved in muscle actin filament organization and muscle arm extension and morphology. Protects actin filaments from depolymerization by unc-60 in vitro. Also has a role in male mating behavior by regulating the copulatory spicules. Binds to F-actin. This Caenorhabditis elegans protein is Tropomyosin isoforms a/b/d/f (lev-11).